The primary structure comprises 555 residues: MELERTTIARMLFDRLGDDRLGVRTREQDWTWDEVVRESAARGAVASSLRRDGPFHVGVLLENTPEFLFWLGGAALAGAAVVGVNPTRRGAELEAEIRYVDCQLIVTDTAGKAQLAGLDLGLSEDRFLLVDDPAYTELVAAHAVESPAEDPGIDASTLFLLLFTSGTTGTSKAVRCSQGRLARLAYANTAKYGHVREDVDYCCMPLFHGNALMALWAPALANGATVCLPRKFSASGFLPDVRFFGATFFTYVGKALAYLMATPEQPDDRDNTLVRGFGTEASPEDKTEFVRRFGAELYEGYGSSEGAGSVTLDPDAPEGALGRPANENIVIVDPDTRVEKARARLDEHGRVLNPDEAIGEMVDKAGASRFEGYYKNEDAIADRIRHGWYWTGDLGYVDEAGFIYFAGRKGDWIRVDGENTSALMVERILRRHPKVVATGVFAVPDPRSGDQVMAAVEVADPTDFDPAEFAAFLGNQDDLGTKAAPRFVRVSRDLPVTGSNKVLKRTLQEQRWRCDDPVFRWVGRGVPEYHEMTDSEKAVLEQEFHTHGRQRFLHV.

This sequence belongs to the ATP-dependent AMP-binding enzyme family.

The enzyme catalyses 3-oxochol-4-en-22-oate + ATP + CoA = 3-oxochol-4-en-22-oyl-CoA + AMP + diphosphate. It catalyses the reaction 3-hydroxy-9-oxo-9,10-seco-chola-1,3,5-trien-22-oate + ATP + CoA = 3-hydroxy-9-oxo-9,10-seco-chola-1,3,5-trien-22-oyl-CoA + AMP + diphosphate. It functions in the pathway steroid metabolism. Its function is as follows. Involved in cholate catabolism. Catalyzes the ATP-dependent formation of CoA thioesters of steroids with isopropanoyl side chains, likely occurring as degradation intermediates. Can use 4-BNC, HSBNC and HIDP as substrate. The protein is Steroid-22-oyl-CoA synthetase of Rhodococcus jostii (strain RHA1).